Here is a 722-residue protein sequence, read N- to C-terminus: Leucine-rich repeat and WD repeat-containing protein 1 (722 aa).

3 LRR repeats span residues 22–42 (DLKK…DQKL), 48–69 (NLDE…LRLH), and 70–91 (NLRI…KQFP). The disordered stretch occupies residues 211–292 (DPKKDTDPVL…QETSAQGTPS (82 aa)). Residues 219–230 (VLQTSEDTAVEN) are compositionally biased toward polar residues. WD repeat units follow at residues 456 to 496 (AHKK…CDYN), 506 to 546 (DTTS…KQGR), 565 to 604 (KCFH…KSRK), 623 to 662 (SSET…ADLQ), and 690 to 722 (VDKT…WKIQ).

Belongs to the LRWD1 family. As to quaternary structure, component of the ORC complex.

It is found in the nucleus. It localises to the chromosome. Its subcellular location is the centromere. The protein localises to the telomere. The protein resides in the cytoplasm. It is found in the cytoskeleton. It localises to the microtubule organizing center. Its subcellular location is the centrosome. The protein localises to the kinetochore. Functionally, required for G1/S transition. Recruits and stabilizes the origin recognition complex (ORC) onto chromatin during G1 to establish pre-replication complex (preRC) and to heterochromatic sites in post-replicated cells. Binds a combination of DNA and histone methylation repressive marks on heterochromatin. Required for silencing of major satellite repeats. May be important ORC2, ORC3 and ORC4 stability. The protein is Leucine-rich repeat and WD repeat-containing protein 1 (lrwd1) of Xenopus laevis (African clawed frog).